The chain runs to 210 residues: MTFLKRVGEYVSDAFKAAKYIGQGMGVVFDHMNRRPVTVQYPFEKLIPSERFRGRIHFEFDKCIACEICVRVCPIDLPVVDWVYNTELKKKELYSYSIDFGVCIFCANCVEFCPTNCLSVTEDYELATYDRHELNYHQVALGRLPSKVTEDPMVTPLREFAYLPKGVIDPHDLPTGSQRAGKRPEEILAEMRAAKAAEAKEDKTAAEQSN.

4Fe-4S ferredoxin-type domains follow at residues 54–83 (GRIH…VDWV) and 94–123 (YSYS…VTED). [4Fe-4S] cluster is bound by residues C63, C66, C69, C73, C103, C106, C109, and C113.

Belongs to the complex I 23 kDa subunit family. NDH-1 is composed of at least 11 different subunits. It depends on [4Fe-4S] cluster as a cofactor.

It localises to the cellular thylakoid membrane. It catalyses the reaction a plastoquinone + NADH + (n+1) H(+)(in) = a plastoquinol + NAD(+) + n H(+)(out). The catalysed reaction is a plastoquinone + NADPH + (n+1) H(+)(in) = a plastoquinol + NADP(+) + n H(+)(out). NDH-1 shuttles electrons from an unknown electron donor, via FMN and iron-sulfur (Fe-S) centers, to quinones in the respiratory and/or the photosynthetic chain. The immediate electron acceptor for the enzyme in this species is believed to be plastoquinone. Couples the redox reaction to proton translocation, and thus conserves the redox energy in a proton gradient. The polypeptide is NAD(P)H-quinone oxidoreductase subunit I (Synechococcus sp. (strain JA-3-3Ab) (Cyanobacteria bacterium Yellowstone A-Prime)).